The sequence spans 707 residues: Elongation factor G 2 (707 aa).

Positions 8 to 290 constitute a tr-type G domain; sequence ERYRNIGISA…AVIDYLPSPA (283 aa). GTP contacts are provided by residues 17-24, 88-92, and 142-145; these read AHIDAGKT, DTPGH, and NKMD.

The protein belongs to the TRAFAC class translation factor GTPase superfamily. Classic translation factor GTPase family. EF-G/EF-2 subfamily.

Its subcellular location is the cytoplasm. Functionally, catalyzes the GTP-dependent ribosomal translocation step during translation elongation. During this step, the ribosome changes from the pre-translocational (PRE) to the post-translocational (POST) state as the newly formed A-site-bound peptidyl-tRNA and P-site-bound deacylated tRNA move to the P and E sites, respectively. Catalyzes the coordinated movement of the two tRNA molecules, the mRNA and conformational changes in the ribosome. This Bordetella bronchiseptica (strain ATCC BAA-588 / NCTC 13252 / RB50) (Alcaligenes bronchisepticus) protein is Elongation factor G 2.